The sequence spans 209 residues: Small ribosomal subunit protein uS3 (209 aa).

Residues 17–86 (IDEFLEKELR…NPQIEVEEIK (70 aa)) enclose the KH type-2 domain.

The protein belongs to the universal ribosomal protein uS3 family. In terms of assembly, part of the 30S ribosomal subunit.

Functionally, binds the lower part of the 30S subunit head. The chain is Small ribosomal subunit protein uS3 from Thermococcus kodakarensis (strain ATCC BAA-918 / JCM 12380 / KOD1) (Pyrococcus kodakaraensis (strain KOD1)).